The chain runs to 66 residues: Large ribosomal subunit protein eL29 (66 aa).

Over residues M1–S14 the composition is skewed to polar residues. Residues M1 to E66 are disordered. Basic residues predominate over residues K15 to S31. The span at I47 to E66 shows a compositional bias: basic and acidic residues.

This sequence belongs to the eukaryotic ribosomal protein eL29 family.

It is found in the cytoplasm. In Tetrahymena thermophila, this protein is Large ribosomal subunit protein eL29 (RPL29).